A 265-amino-acid chain; its full sequence is Probable cyclic nucleotide phosphodiesterase SynWH7803_1390 (265 aa).

Aspartate 9, histidine 11, aspartate 49, asparagine 86, histidine 157, histidine 196, and histidine 198 together coordinate Fe cation. AMP contacts are provided by residues histidine 11, aspartate 49, and 86-87; that span reads NH. Histidine 198 lines the AMP pocket.

Belongs to the cyclic nucleotide phosphodiesterase class-III family. Fe(2+) is required as a cofactor.

The sequence is that of Probable cyclic nucleotide phosphodiesterase SynWH7803_1390 from Synechococcus sp. (strain WH7803).